A 226-amino-acid chain; its full sequence is Leucyl/phenylalanyl-tRNA--protein transferase (226 aa).

This sequence belongs to the L/F-transferase family.

The protein resides in the cytoplasm. The catalysed reaction is N-terminal L-lysyl-[protein] + L-leucyl-tRNA(Leu) = N-terminal L-leucyl-L-lysyl-[protein] + tRNA(Leu) + H(+). It catalyses the reaction N-terminal L-arginyl-[protein] + L-leucyl-tRNA(Leu) = N-terminal L-leucyl-L-arginyl-[protein] + tRNA(Leu) + H(+). The enzyme catalyses L-phenylalanyl-tRNA(Phe) + an N-terminal L-alpha-aminoacyl-[protein] = an N-terminal L-phenylalanyl-L-alpha-aminoacyl-[protein] + tRNA(Phe). Functionally, functions in the N-end rule pathway of protein degradation where it conjugates Leu, Phe and, less efficiently, Met from aminoacyl-tRNAs to the N-termini of proteins containing an N-terminal arginine or lysine. The chain is Leucyl/phenylalanyl-tRNA--protein transferase from Pseudomonas fluorescens (strain ATCC BAA-477 / NRRL B-23932 / Pf-5).